We begin with the raw amino-acid sequence, 1182 residues long: Rho guanine nucleotide exchange factor osg-1 (1182 aa).

Over residues Met1–Ser12 the composition is skewed to acidic residues. Positions Met1–Pro96 are disordered. Over residues Ala29–Asn41 the composition is skewed to polar residues. Residues Ala69–Arg78 are compositionally biased toward basic and acidic residues. The DH domain occupies Val357–His544. Residues Glu637–Met669 adopt a coiled-coil conformation. The tract at residues Ile863–Thr884 is disordered. The segment covering Ser865–Ser879 has biased composition (low complexity). The stretch at Val897–Ile922 forms a coiled coil.

As to expression, expressed in muscles in the body wall and head, and in the nervous system in neurons including FLP and ASE neurons in the head.

Functionally, probable guanine nucleotide exchange factor which regulates the Rho GTPase rho-1. Functions in ASE sensory neurons where it promotes neuronal degeneration under conditions of oxidative stress. In Caenorhabditis elegans, this protein is Rho guanine nucleotide exchange factor osg-1.